A 122-amino-acid chain; its full sequence is uncharacterized protein (122 aa).

The protein localises to the mitochondrion. This is an uncharacterized protein from Arabidopsis thaliana (Mouse-ear cress).